A 401-amino-acid polypeptide reads, in one-letter code: Multidrug resistance protein MdtH (401 aa).

A run of 11 helical transmembrane segments spans residues 13–33 (YFLL…FPLI), 34–54 (SIRF…ALGL), 99–116 (PWIL…GTLF), 139–159 (LLMM…SWLL), 165–185 (FVCW…VWLL), 214–234 (VLTL…LPIV), 243–263 (AAVK…LYPI), 277–297 (LMFG…ITHL), 299–319 (TLFM…PARE), 340–360 (LGLA…YDTG), and 368–388 (LPWF…YWQF).

The protein belongs to the major facilitator superfamily. DHA1 family. MdtH (TC 2.A.1.2.21) subfamily.

The protein localises to the cell inner membrane. This Yersinia enterocolitica serotype O:8 / biotype 1B (strain NCTC 13174 / 8081) protein is Multidrug resistance protein MdtH.